The following is a 102-amino-acid chain: Neuropeptide F (102 aa).

Positions Met1–Ser29 are cleaved as a signal peptide. A propeptide spanning residues Arg30–Pro32 is cleaved from the precursor. Phe62 is modified (phenylalanine amide). Positions Gly66–Phe102 are excised as a propeptide.

The protein belongs to the NPY family.

The protein localises to the secreted. An integral part of the sensory system that mediates food signaling, providing the neural basis for the regulation of food response; coordinates larval foraging and social behavior changes during development. May have a hormonal role in females. The polypeptide is Neuropeptide F (Drosophila pseudoobscura pseudoobscura (Fruit fly)).